The chain runs to 158 residues: Inorganic pyrophosphatase (158 aa).

A Mg(2+)-binding site is contributed by Glu-8. Positions 16, 30, and 42 each coordinate substrate. Mg(2+) contacts are provided by Asp-52, Asp-57, Asp-84, and Asp-89. Asp-89 (proton acceptor) is an active-site residue. A substrate-binding site is contributed by Tyr-125.

Belongs to the PPase family. As to quaternary structure, homohexamer. The cofactor is Mg(2+).

The protein localises to the cytoplasm. It carries out the reaction diphosphate + H2O = 2 phosphate + H(+). In terms of biological role, catalyzes the hydrolysis of inorganic pyrophosphate (PPi) forming two phosphate ions. The sequence is that of Inorganic pyrophosphatase from Corynebacterium efficiens (strain DSM 44549 / YS-314 / AJ 12310 / JCM 11189 / NBRC 100395).